The sequence spans 350 residues: UDP-glucose 4-epimerase (350 aa).

Residue Lys7 to Phe38 coordinates NAD(+). Ser133 contacts substrate. The Proton acceptor role is filled by Tyr157.

This sequence belongs to the NAD(P)-dependent epimerase/dehydratase family. It depends on NAD(+) as a cofactor.

The enzyme catalyses UDP-alpha-D-glucose = UDP-alpha-D-galactose. It functions in the pathway carbohydrate metabolism; galactose metabolism. This is UDP-glucose 4-epimerase (GALE) from Pisum sativum (Garden pea).